The following is a 259-amino-acid chain: MATIKEIKELLVTVKELESPIFLELEKDNRSGVQKEISKRKRAIQAELDENLRLESMLSYEKELYKQGLTLIVGIDEVGRGPLAGPVVAAAVILPKNCKIKGLNDSKKIPKKKHLEIFQAVQDQALSIGIGIIDNQVIDQVNIYEATKLAMQEAISQLSPQPEHLLIDAMKLDLPISQTSIIKGDANSLSIAAASIVAKVTRDELMKEYDQQFPGYDFATNAGYGTAKHLEGLTKLGVTPIHRTSFEPVKSLVLGKKES.

The RNase H type-2 domain occupies Thr70–Glu258. A divalent metal cation-binding residues include Asp76, Glu77, and Asp168.

The protein belongs to the RNase HII family. The cofactor is Mn(2+). Mg(2+) is required as a cofactor.

The protein localises to the cytoplasm. The enzyme catalyses Endonucleolytic cleavage to 5'-phosphomonoester.. Functionally, endonuclease that specifically degrades the RNA of RNA-DNA hybrids. The chain is Ribonuclease HII from Streptococcus pneumoniae serotype 2 (strain D39 / NCTC 7466).